The chain runs to 128 residues: Protein Wnt-8 (128 aa).

Residue serine 1 is the site of O-palmitoleoyl serine attachment. 2 disulfide bridges follow: cysteine 71–cysteine 109 and cysteine 87–cysteine 102. N-linked (GlcNAc...) asparagine glycans are attached at residues asparagine 74 and asparagine 93.

Belongs to the Wnt family. Palmitoleoylation is required for efficient binding to frizzled receptors. Depalmitoleoylation leads to Wnt signaling pathway inhibition. Post-translationally, proteolytic processing by tiki1 and tiki2 promotes oxidation and formation of large disulfide-bond oligomers, leading to inactivation of wnt8.

The protein localises to the secreted. Its subcellular location is the extracellular space. The protein resides in the extracellular matrix. Functionally, ligand for members of the frizzled family of seven transmembrane receptors. Probable developmental protein. May be a signaling molecule which affects the development of discrete regions of tissues. Is likely to signal over only few cell diameters. This is Protein Wnt-8 (wnt8) from Thunnus thynnus (Atlantic bluefin tuna).